The primary structure comprises 262 residues: Acyl-[acyl-carrier-protein]--UDP-N-acetylglucosamine O-acyltransferase (262 aa).

This sequence belongs to the transferase hexapeptide repeat family. LpxA subfamily. In terms of assembly, homotrimer.

It localises to the cytoplasm. The enzyme catalyses a (3R)-hydroxyacyl-[ACP] + UDP-N-acetyl-alpha-D-glucosamine = a UDP-3-O-[(3R)-3-hydroxyacyl]-N-acetyl-alpha-D-glucosamine + holo-[ACP]. It participates in glycolipid biosynthesis; lipid IV(A) biosynthesis; lipid IV(A) from (3R)-3-hydroxytetradecanoyl-[acyl-carrier-protein] and UDP-N-acetyl-alpha-D-glucosamine: step 1/6. Involved in the biosynthesis of lipid A, a phosphorylated glycolipid that anchors the lipopolysaccharide to the outer membrane of the cell. This is Acyl-[acyl-carrier-protein]--UDP-N-acetylglucosamine O-acyltransferase from Enterobacter sp. (strain 638).